The following is a 144-amino-acid chain: uncharacterized protein (144 aa).

The signal sequence occupies residues 1–22 (MCTDVAFFSLDCLATWLGGVCS).

This is an uncharacterized protein from Saccharomyces cerevisiae (strain ATCC 204508 / S288c) (Baker's yeast).